The primary structure comprises 360 residues: Phenylalanine--tRNA ligase alpha subunit (360 aa).

Residue E260 participates in Mg(2+) binding.

Belongs to the class-II aminoacyl-tRNA synthetase family. Phe-tRNA synthetase alpha subunit type 1 subfamily. As to quaternary structure, tetramer of two alpha and two beta subunits. Mg(2+) is required as a cofactor.

It localises to the cytoplasm. The catalysed reaction is tRNA(Phe) + L-phenylalanine + ATP = L-phenylalanyl-tRNA(Phe) + AMP + diphosphate + H(+). This is Phenylalanine--tRNA ligase alpha subunit from Methylobacterium sp. (strain 4-46).